The chain runs to 541 residues: Cytochrome bc1 complex cytochrome b subunit (541 aa).

Residues 36–56 form a helical membrane-spanning segment; it reads FLLGEIALYSFIILILTGVYL. Heme-binding residues include histidine 105 and histidine 119. 3 helical membrane-spanning segments follow: residues 109 to 129, 137 to 157, and 169 to 189; these read ALMFVVSMMVHMMRIFFTGAF, WVIGVVLLILGIAEGFMGYSL, and IMSAIIVGLPIIGTWMHWMIF. Heme is bound by residues histidine 206 and histidine 221. The next 5 helical transmembrane spans lie at 207–227, 256–276, 325–345, 371–391, and 408–428; these read VLIIPGIILGLIAAHLALVWY, SVAFGAITLGFLSLLAGVTTI, VFWVAIMLGILVVLLIAYPWI, LGVMALIFYILLTISGGNDIW, and IGLIVFPAIGYFVTYRLCIGL.

This sequence belongs to the cytochrome b family. As to quaternary structure, the cytochrome bc1 complex is composed of a cytochrome b (QcrB), the Rieske protein iron-sulfur (QcrA) and a diheme cytochrome c (QcrC) subunit. The cofactor is heme.

It is found in the cell membrane. The catalysed reaction is a quinol + 2 Fe(III)-[cytochrome c](out) = a quinone + 2 Fe(II)-[cytochrome c](out) + 2 H(+)(out). Functionally, cytochrome b subunit of the cytochrome bc1 complex, an essential component of the respiratory electron transport chain required for ATP synthesis. The bc1 complex catalyzes the oxidation of menaquinol and the reduction of cytochrome c in the respiratory chain. The bc1 complex operates through a Q-cycle mechanism that couples electron transfer to generation of the proton gradient that drives ATP synthesis. This chain is Cytochrome bc1 complex cytochrome b subunit (qcrB), found in Corynebacterium efficiens (strain DSM 44549 / YS-314 / AJ 12310 / JCM 11189 / NBRC 100395).